Consider the following 284-residue polypeptide: Ermin (284 aa).

The segment at 1 to 23 (MTDVPATFTQAECNGDKPPENGQ) is disordered. At Ser73 the chain carries Phosphoserine. The disordered stretch occupies residues 110–251 (REGHQWEKIP…PTLGKKSDIS (142 aa)). Composition is skewed to basic and acidic residues over residues 126–140 (EIRR…QPLK) and 171–183 (LHSK…KVWD). Positions 184-200 (EEIDDDDDDNCNNDEDE) are enriched in acidic residues. Residues 201–220 (VRVIEFKKKHEEVSQFKEEG) show a composition bias toward basic and acidic residues. A phosphoserine mark is found at Ser214, Ser226, Ser230, and Ser233. Residues 225–235 (DSPLSSASSQA) show a composition bias toward low complexity. Thr237 bears the Phosphothreonine mark. The tract at residues 265–284 (KIRKGNTKQRIDEFESMMHL) is binds actin.

As to quaternary structure, binds actin. As to expression, highly expressed in adult and fetal brain. Expressed at intermediate levels in the lung and liver.

Its subcellular location is the cytoplasm. It localises to the cytoskeleton. Functionally, plays a role in cytoskeletal rearrangements during the late wrapping and/or compaction phases of myelinogenesis as well as in maintenance and stability of myelin sheath in the adult. May play an important role in late-stage oligodendroglia maturation, myelin/Ranvier node formation during CNS development, and in the maintenance and plasticity of related structures in the mature CNS. This chain is Ermin (ERMN), found in Homo sapiens (Human).